Consider the following 246-residue polypeptide: Bis(5'-nucleosyl)-tetraphosphatase PrpE [asymmetrical] (246 aa).

The protein belongs to the PrpE family. Ni(2+) is required as a cofactor.

It carries out the reaction P(1),P(4)-bis(5'-guanosyl) tetraphosphate + H2O = GMP + GTP + 2 H(+). In terms of biological role, asymmetrically hydrolyzes Ap4p to yield AMP and ATP. The sequence is that of Bis(5'-nucleosyl)-tetraphosphatase PrpE [asymmetrical] from Bacillus mycoides (strain KBAB4) (Bacillus weihenstephanensis).